We begin with the raw amino-acid sequence, 1255 residues long: Membrane-associated guanylate kinase, WW and PDZ domain-containing protein 1 (1255 aa).

The region spanning 17–105 (ECTVKRGPQG…AVTFKAVRQG (89 aa)) is the PDZ 1 domain. Residues 96 to 287 (AVTFKAVRQG…APITDPSQKF (192 aa)) form the Guanylate kinase-like domain. 103–110 (RQGGRLNK) serves as a coordination point for ATP. 2 disordered regions span residues 208–227 (HSLQSGSKQSTPKRTKSYND) and 235–265 (HTENEEEEDVPEMNSSFTADSGDQDEPTLQE). The 34-residue stretch at 300-333 (GPLPENWEMAYTENGEVYFIDHNAKTTSWLDPRC) folds into the WW 1 domain. Residue Ser357 is modified to Phosphoserine. The WW 2 domain occupies 359-392 (LELPAGWEKIEDPVYGVYYVDHINRKTQYENPVL). The tract at residues 395 to 462 (KRKRQLEQQQ…QGKPFFTRNP (68 aa)) is disordered. Positions 402 to 414 (QQQQQQQHQQQPQ) are enriched in low complexity. Residues 434–444 (PVAPSHPPSNP) are compositionally biased toward pro residues. The region spanning 471–553 (HTKLRKSSRG…GASVDLELCR (83 aa)) is the PDZ 2 domain. Positions 585 to 601 (QETYDSPASHSSKTGKV) are enriched in polar residues. Disordered regions lie at residues 585–622 (QETYDSPASHSSKTGKVSNMKDARPSSPADVASNSSHG) and 719–820 (QRGG…GERD). One can recognise a PDZ 3 domain in the interval 642 to 720 (TVHIVKGPMG…GSEVTLLVQR (79 aa)). Ser729 and Ser740 each carry phosphoserine. Positions 741–755 (QNSSQHSVSSLRSLH) are enriched in low complexity. Ser799 bears the Phosphoserine mark. In terms of domain architecture, PDZ 4 spans 840 to 922 (DIFLWRKETG…QGHVNLTVRR (83 aa)). The tract at residues 932–984 (ENEVPSPASSHHSSNQPASLTEEKRTPQGSQNSLNTVSSGSGSTSGIGSGGGG) is disordered. 2 stretches are compositionally biased toward polar residues: residues 938–950 (PASSHHSSNQPAS) and 958–967 (PQGSQNSLNT). The span at 974–984 (STSGIGSGGGG) shows a compositional bias: gly residues. Residues 997 to 1093 (DVEIRRGENE…TVTLRIIPGD (97 aa)) form the PDZ 5 domain. Ser1070 carries the post-translational modification Phosphoserine. The segment covering 1111–1129 (TTTHAPSQQGTQETRTTTK) has biased composition (polar residues). Residues 1111-1142 (TTTHAPSQQGTQETRTTTKPKPDSQFEFKGPQ) form a disordered region. The 83-residue stretch at 1151-1233 (TVELERGAKG…RVRLFLRRGD (83 aa)) folds into the PDZ 6 domain.

In terms of assembly, part of a complex composed of AMOTL2, MAGI1 and CDH5, within the complex AMOTL2 acts as a scaffold protein for the interaction of MAGI1 with CDH5. The complex is required for coupling actin fibers to cell junctions in endothelial cells. Interacts through its WW 2 domain with SYNPO and through its PDZ 5 domain with ACTN4. Interacts with cytoplasmic domain of ADGRB1. Interacts via its WW domains with DRPLA. Interacts with ESAM, LRP2 and CXADR. May interact with CTNNB1. Interacts through its PDZ 1 domain with NET1. Interacts with ASIC3 and AMOT. Interacts with FCHSD2. Interacts with IGSF5/JAM4 and through its PDZ 2 and 3 domains with NPHS1 forming a tripartite complex. Interacts with DDN. May interact (via PDZ domain) with RAPGEF2. Interacts with DLL1. Interacts with KCNJ10 and possibly with KCNJ10/KCNJ16 heterodimer; this interaction may facilitate KCNJ10/KCNJ16 potassium channel expression at the basolateral membrane in kidney tubular cells. Interacts with PRRG4 (via cytoplasmic domain).

The protein localises to the cell junction. Its subcellular location is the tight junction. It is found in the cytoplasm. The protein resides in the membrane. Plays a role in coupling actin fibers to cell junctions in endothelial cells, via its interaction with AMOTL2 and CDH5. May regulate acid-induced ASIC3 currents by modulating its expression at the cell surface. This is Membrane-associated guanylate kinase, WW and PDZ domain-containing protein 1 (Magi1) from Rattus norvegicus (Rat).